Consider the following 77-residue polypeptide: MGGLSIWHWLIVLLIVALVFGTKKLRNIGNDLGSAVKGFKDGMREGEAPADPQQLPRSGSVNVDAKDATRSSDSNKA.

Residues 1 to 21 traverse the membrane as a helical segment; the sequence is MGGLSIWHWLIVLLIVALVFG. The interval 40–77 is disordered; the sequence is KDGMREGEAPADPQQLPRSGSVNVDAKDATRSSDSNKA. Over residues 64–77 the composition is skewed to basic and acidic residues; it reads DAKDATRSSDSNKA.

It belongs to the TatA/E family. The Tat system comprises two distinct complexes: a TatABC complex, containing multiple copies of TatA, TatB and TatC subunits, and a separate TatA complex, containing only TatA subunits. Substrates initially bind to the TatABC complex, which probably triggers association of the separate TatA complex to form the active translocon.

The protein localises to the cell inner membrane. Its function is as follows. Part of the twin-arginine translocation (Tat) system that transports large folded proteins containing a characteristic twin-arginine motif in their signal peptide across membranes. TatA could form the protein-conducting channel of the Tat system. The chain is Sec-independent protein translocase protein TatA from Burkholderia thailandensis (strain ATCC 700388 / DSM 13276 / CCUG 48851 / CIP 106301 / E264).